The primary structure comprises 721 residues: Mitogen-activated protein kinase 6 (721 aa).

A Peptide (Met-Gly) (interchain with G-Cter in ubiquitin) cross-link involves residue methionine 1. Positions 20–316 (YMDLKPLGCG…AEEALSHPYM (297 aa)) constitute a Protein kinase domain. ATP-binding positions include 26-34 (LGCGGNGLV) and lysine 49. Aspartate 152 acts as the Proton acceptor in catalysis. A Phosphoserine; by PAK1, PAK2 and PAK3 modification is found at serine 189. Residues 189–191 (SEG) carry the SEG motif motif. The short motif at 332-337 (FHIEDE) is the FRIEDE motif element. Phosphoserine is present on residues serine 386, serine 452, serine 556, serine 558, serine 665, and serine 684. Residues 701-715 (AMKSSPQIPHQTYSS) show a composition bias toward polar residues. The interval 701–721 (AMKSSPQIPHQTYSSILKHLN) is disordered.

It belongs to the protein kinase superfamily. CMGC Ser/Thr protein kinase family. MAP kinase subfamily. As to quaternary structure, heterodimer with ERK4/MAPK4. Interacts with (via FRIEDE motif) MAPKAPK5. Interacts with UBE3A; this interaction may be indirect and mediated by HERC2, possibly via HERC2 interaction with NEURL4. Requires Mg(2+) as cofactor. In terms of processing, phosphorylated at Ser-189 by PAK1, PAK2 and PAK3 resulting in catalytic activation. Phosphorylated by MAPKAPK5 at other sites. Post-translationally, ubiquitination at Met-1 leads to degradation by the proteasome pathway. As to expression, highest expression in the skeletal muscle, followed by the brain. Also found in heart, placenta, lung, liver, pancreas, kidney and skin fibroblasts.

Its subcellular location is the cytoplasm. The protein resides in the nucleus. It catalyses the reaction L-seryl-[protein] + ATP = O-phospho-L-seryl-[protein] + ADP + H(+). The catalysed reaction is L-threonyl-[protein] + ATP = O-phospho-L-threonyl-[protein] + ADP + H(+). Activated by phosphorylation at Ser-189. Functionally, atypical MAPK protein. Phosphorylates microtubule-associated protein 2 (MAP2) and MAPKAPK5. The precise role of the complex formed with MAPKAPK5 is still unclear, but the complex follows a complex set of phosphorylation events: upon interaction with atypical MAPKAPK5, ERK3/MAPK6 is phosphorylated at Ser-189 and then mediates phosphorylation and activation of MAPKAPK5, which in turn phosphorylates ERK3/MAPK6. May promote entry in the cell cycle. The polypeptide is Mitogen-activated protein kinase 6 (MAPK6) (Homo sapiens (Human)).